Reading from the N-terminus, the 122-residue chain is Large ribosomal subunit protein uL14 (122 aa).

It belongs to the universal ribosomal protein uL14 family. As to quaternary structure, part of the 50S ribosomal subunit. Forms a cluster with proteins L3 and L19. In the 70S ribosome, L14 and L19 interact and together make contacts with the 16S rRNA in bridges B5 and B8.

Functionally, binds to 23S rRNA. Forms part of two intersubunit bridges in the 70S ribosome. This Mycolicibacterium gilvum (strain PYR-GCK) (Mycobacterium gilvum (strain PYR-GCK)) protein is Large ribosomal subunit protein uL14.